Consider the following 90-residue polypeptide: DNA-binding protein HU (90 aa).

The protein belongs to the bacterial histone-like protein family. As to quaternary structure, homodimer.

Its function is as follows. Histone-like DNA-binding protein which is capable of wrapping DNA to stabilize it, and thus to prevent its denaturation under extreme environmental conditions. In Staphylococcus aureus (strain COL), this protein is DNA-binding protein HU (hup).